The chain runs to 568 residues: Methyl-accepting chemotaxis protein CtpH (568 aa).

At 1-39 (MPASPGHRDVLGCLVAACVPVQPGNPSRRSMLQQSLRAQ) the chain is on the cytoplasmic side. A helical transmembrane segment spans residues 40-60 (ILVLLGGSLAALLLIALACFG). The Periplasmic segment spans residues 61–216 (SLTGDVRAYR…ISAEARRTML (156 aa)). The chain crosses the membrane as a helical span at residues 217 to 237 (LGSLVLIGASLAVALLSLWLV). The Cytoplasmic segment spans residues 238–568 (NRNLVRPVQR…LGDALQRLRA (331 aa)). The HAMP domain occupies 239–291 (RNLVRPVQRLIEHIAQLSHGDFGERIEIRRKDELGKLALAANTLRDFLVDIFD). A Methyl-accepting transducer domain is found at 296–532 (STRDLDSASG…EISRNLTEIA (237 aa)).

The protein belongs to the methyl-accepting chemotaxis (MCP) protein family.

It is found in the cell inner membrane. Chemotactic-signal transducers respond to changes in the concentration of attractants and repellents in the environment, transduce a signal from the outside to the inside of the cell, and facilitate sensory adaptation through the variation of the level of methylation. Chemoreceptor for inorganic phosphate, which is required for taxis at high concentrations of phosphate. Recognizes inorganic phosphate directly. Can also bind to other components that have a pyrophosphate group, including ATP and ADP. This is Methyl-accepting chemotaxis protein CtpH from Pseudomonas aeruginosa (strain ATCC 15692 / DSM 22644 / CIP 104116 / JCM 14847 / LMG 12228 / 1C / PRS 101 / PAO1).